Reading from the N-terminus, the 309-residue chain is Ornithine carbamoyltransferase (309 aa).

Residues 51 to 54 (STRT), Gln-78, Arg-102, and 129 to 132 (HPVQ) contribute to the carbamoyl phosphate site. Residues Asn-159, Asp-223, and 227–228 (SM) contribute to the L-ornithine site. Residues 263–264 (CL) and Arg-291 each bind carbamoyl phosphate.

It belongs to the aspartate/ornithine carbamoyltransferase superfamily. OTCase family.

It localises to the cytoplasm. It carries out the reaction carbamoyl phosphate + L-ornithine = L-citrulline + phosphate + H(+). Its pathway is amino-acid biosynthesis; L-arginine biosynthesis; L-arginine from L-ornithine and carbamoyl phosphate: step 1/3. Functionally, reversibly catalyzes the transfer of the carbamoyl group from carbamoyl phosphate (CP) to the N(epsilon) atom of ornithine (ORN) to produce L-citrulline. The protein is Ornithine carbamoyltransferase of Nitratiruptor sp. (strain SB155-2).